Reading from the N-terminus, the 265-residue chain is Tryptophan synthase alpha chain (265 aa).

Residues Glu49 and Glu60 each act as proton acceptor in the active site.

Belongs to the TrpA family. As to quaternary structure, tetramer of two alpha and two beta chains.

The catalysed reaction is (1S,2R)-1-C-(indol-3-yl)glycerol 3-phosphate + L-serine = D-glyceraldehyde 3-phosphate + L-tryptophan + H2O. It participates in amino-acid biosynthesis; L-tryptophan biosynthesis; L-tryptophan from chorismate: step 5/5. In terms of biological role, the alpha subunit is responsible for the aldol cleavage of indoleglycerol phosphate to indole and glyceraldehyde 3-phosphate. The sequence is that of Tryptophan synthase alpha chain from Herminiimonas arsenicoxydans.